The primary structure comprises 1203 residues: Exonuclease/helicase subunit RexA (1203 aa).

The region spanning 4–472 (VKLTPEQNEA…IRLKENFRSR (469 aa)) is the UvrD-like helicase ATP-binding domain. Residue 25-32 (ASAGSGKT) coordinates ATP. The UvrD-like helicase C-terminal domain maps to 503-785 (VQGNISDYPV…RVMTFHKSKG (283 aa)).

The protein belongs to the helicase family. AddA subfamily. Heterodimer of RexA (AddA) and RexB. It depends on Mg(2+) as a cofactor.

It carries out the reaction Couples ATP hydrolysis with the unwinding of duplex DNA by translocating in the 3'-5' direction.. The catalysed reaction is ATP + H2O = ADP + phosphate + H(+). The heterodimer acts both as an ATP-dependent DNA helicase and an ATP-dependent, dual-direction single-stranded exonuclease. Recognizes the L.lactis chi site (5'-GCGCGTG-3'), which stimulates homologous recombination. The RexA (AddA) nuclease domain is required for chi fragment generation; this subunit has 3'-&gt;5' exonuclease activity and probably also performs the helicase function. This Lactococcus lactis subsp. cremoris (strain MG1363) protein is Exonuclease/helicase subunit RexA.